The chain runs to 856 residues: Translation initiation factor IF-2 (856 aa).

The 171-residue stretch at 356 to 526 (PRAPVVTVMG…LLIADLLELK (171 aa)) folds into the tr-type G domain. Positions 365-372 (GHVDHGKT) are G1. 365–372 (GHVDHGKT) lines the GTP pocket. Positions 390 to 394 (GITQH) are G2. Positions 412–415 (DTPG) are G3. GTP contacts are provided by residues 412-416 (DTPGH) and 466-469 (NKID). The segment at 466-469 (NKID) is G4. The tract at residues 502–504 (SAK) is G5.

It belongs to the TRAFAC class translation factor GTPase superfamily. Classic translation factor GTPase family. IF-2 subfamily.

The protein resides in the cytoplasm. One of the essential components for the initiation of protein synthesis. Protects formylmethionyl-tRNA from spontaneous hydrolysis and promotes its binding to the 30S ribosomal subunits. Also involved in the hydrolysis of GTP during the formation of the 70S ribosomal complex. This is Translation initiation factor IF-2 from Ehrlichia ruminantium (strain Gardel).